Reading from the N-terminus, the 239-residue chain is MSNKKDVAVKISGGKKIREAREKVKSDTLYNLTNAVERLKSASYVKFDPTLEIVMKLGIDSRHSDQMVRGVVNLPAGTGKTVRVAVICKEEREEEAKSAGADLVGSTNIIDEIKAGKINFDVCIATPDMMVAIGSVARILGPKGLMPNPKLGTVTLDIKNAIKNAKSGQVEYRAEKAGIIHAGLGKLSFSDQDLLKNLNAFIEAVIKAKPAGLKGSYLKAMYLSSTMGASVQIDLTSIA.

The protein belongs to the universal ribosomal protein uL1 family. Part of the 50S ribosomal subunit.

In terms of biological role, binds directly to 23S rRNA. The L1 stalk is quite mobile in the ribosome, and is involved in E site tRNA release. Functionally, protein L1 is also a translational repressor protein, it controls the translation of the L11 operon by binding to its mRNA. This chain is Large ribosomal subunit protein uL1, found in Rickettsia africae (strain ESF-5).